The following is a 473-amino-acid chain: Argininosuccinate lyase (473 aa).

It belongs to the lyase 1 family. Argininosuccinate lyase subfamily.

The protein resides in the cytoplasm. The enzyme catalyses 2-(N(omega)-L-arginino)succinate = fumarate + L-arginine. Its pathway is amino-acid biosynthesis; L-arginine biosynthesis; L-arginine from L-ornithine and carbamoyl phosphate: step 3/3. This Chelativorans sp. (strain BNC1) protein is Argininosuccinate lyase.